Consider the following 282-residue polypeptide: Kallikrein-11 (282 aa).

Positions 1–50 (MQRLRWLRDWKSSGRGLTAAKEPGARSSPLQAMRILQLILLALATGLVGG) are cleaved as a signal peptide. Residues 51-53 (ETR) constitute a propeptide, activation peptide. Positions 53-280 (RIIKGFECKP…YVDWIQETMK (228 aa)) constitute a Peptidase S1 domain. Cystine bridges form between cysteine 60–cysteine 195, cysteine 79–cysteine 95, cysteine 167–cysteine 269, cysteine 174–cysteine 241, cysteine 206–cysteine 220, and cysteine 231–cysteine 256. Histidine 94 (charge relay system) is an active-site residue. The N-linked (GlcNAc...) asparagine glycan is linked to asparagine 131. Catalysis depends on aspartate 142, which acts as the Charge relay system. N-linked (GlcNAc...) asparagine glycosylation is found at asparagine 197 and asparagine 213. The active-site Charge relay system is the serine 235. Asparagine 242 carries N-linked (GlcNAc...) asparagine glycosylation.

This sequence belongs to the peptidase S1 family. Kallikrein subfamily. In terms of processing, about 40% of KLK11 is inactivated by internal cleavage after Arg-188. This proteolytic inactivation may be effected by plasminogen. Expressed in brain, skin and prostate. Isoform 1 is expressed preferentially in brain. Isoform 2 is expressed in prostate. Present in seminal plasma at concentrations ranging from 2 to 37 microg/mL (at protein level).

Its subcellular location is the secreted. The protein resides in the golgi apparatus. Its function is as follows. Possible multifunctional protease. Efficiently cleaves 'bz-Phe-Arg-4-methylcoumaryl-7-amide', a kallikrein substrate, and weakly cleaves other substrates for kallikrein and trypsin. Cleaves synthetic peptides after arginine but not lysine residues. This Homo sapiens (Human) protein is Kallikrein-11 (KLK11).